Consider the following 472-residue polypeptide: Serralysin A (472 aa).

A propeptide spanning residues 1 to 17 (MEKNLSSRDDDALHSLS) is cleaved from the precursor. Histidine 186 provides a ligand contact to Zn(2+). Glutamate 187 is a catalytic residue. The Zn(2+) site is built by histidine 190 and tyrosine 221. 31 residues coordinate Ca(2+): arginine 258, glycine 260, threonine 262, aspartate 290, glycine 292, glycine 293, threonine 332, glutamate 334, glycine 339, glycine 341, aspartate 343, asparagine 348, alanine 350, asparagine 352, glycine 356, glycine 357, alanine 358, glycine 359, aspartate 361, glycine 365, glycine 366, glycine 367, glycine 368, aspartate 370, glycine 374, glycine 375, glycine 377, aspartate 379, aspartate 388, aspartate 395, and aspartate 405. 2 Hemolysin-type calcium-binding repeats span residues 337–354 (IGGS…DNIL) and 355–372 (RGGA…ADRL).

The protein belongs to the peptidase M10B family. It depends on Ca(2+) as a cofactor. Requires Zn(2+) as cofactor.

It localises to the secreted. It catalyses the reaction Preferential cleavage of bonds with hydrophobic residues in P1'.. In Dickeya chrysanthemi (Pectobacterium chrysanthemi), this protein is Serralysin A (prtA).